The sequence spans 197 residues: Holliday junction branch migration complex subunit RuvA (197 aa).

The interval M1–K61 is domain I. The tract at residues S62–E140 is domain II. Residues D141–A150 are flexible linker. A domain III region spans residues A150–K197.

Belongs to the RuvA family. As to quaternary structure, homotetramer. Forms an RuvA(8)-RuvB(12)-Holliday junction (HJ) complex. HJ DNA is sandwiched between 2 RuvA tetramers; dsDNA enters through RuvA and exits via RuvB. An RuvB hexamer assembles on each DNA strand where it exits the tetramer. Each RuvB hexamer is contacted by two RuvA subunits (via domain III) on 2 adjacent RuvB subunits; this complex drives branch migration. In the full resolvosome a probable DNA-RuvA(4)-RuvB(12)-RuvC(2) complex forms which resolves the HJ.

The protein localises to the cytoplasm. Functionally, the RuvA-RuvB-RuvC complex processes Holliday junction (HJ) DNA during genetic recombination and DNA repair, while the RuvA-RuvB complex plays an important role in the rescue of blocked DNA replication forks via replication fork reversal (RFR). RuvA specifically binds to HJ cruciform DNA, conferring on it an open structure. The RuvB hexamer acts as an ATP-dependent pump, pulling dsDNA into and through the RuvAB complex. HJ branch migration allows RuvC to scan DNA until it finds its consensus sequence, where it cleaves and resolves the cruciform DNA. The chain is Holliday junction branch migration complex subunit RuvA from Lactobacillus delbrueckii subsp. bulgaricus (strain ATCC BAA-365 / Lb-18).